The following is a 112-amino-acid chain: MTVLSDMKCEACQADAPKVTDEELAELVRMIPDWSVQVRDGIMQLERVYKFKNFKLAMAFTNKLAELAEEEFHHPGIFTEWGKVTVTWWSHSIKGLHRNDFIMAAKTDQLLG.

Belongs to the pterin-4-alpha-carbinolamine dehydratase family.

It carries out the reaction (4aS,6R)-4a-hydroxy-L-erythro-5,6,7,8-tetrahydrobiopterin = (6R)-L-erythro-6,7-dihydrobiopterin + H2O. The polypeptide is Putative pterin-4-alpha-carbinolamine dehydratase (Shewanella putrefaciens (strain CN-32 / ATCC BAA-453)).